The following is a 504-amino-acid chain: MTSRKIPSIMGTQHPDNANAPFWESSQQPFISAYRETGEAFENFNELNVDEYMWDWEGKHADAAVIDRLFSTEYDYFKDHQIGRDKFLTFRFPNIWEEKGYNLMQAMTAFLSSEDFAHDLGFSRPLFEAILPMAQRADQILKMQVLFEKLANFKSAEFTRSDKNTPYIEMIPLFEDFETQLHAPEILKEYLNLHEEHFGFRPKYMRVFLAGSDSALTAGFMSSITGNKLAIARLHEFAEEENIEIFPISGTGSAIFRGGLSPHRIDRYVTEFPGVRTATVQSAFRYDFPIEEVQKGIAELKEKLPVAEPLKISLDDQKILTEIAEESAKFYSNTLDNLVPSMQAIFKAFPKRRDRRQHVGVLGYSRSVDGIELPRAINFTGSFYSVGVPPEFIGFGRALKHLDADHLSVFVRSYPSMSKDFNELARFVNMDALQILKTQNSAWAEVEEDILIMQRIFKFEIGPQTREEQQHAEIALQVVQFKDGAPVAITALINRMAQLRHFLG.

The span at M1 to D16 shows a compositional bias: polar residues. The disordered stretch occupies residues M1–P21.

The protein belongs to the PEPCase type 2 family. In terms of assembly, homotetramer. It depends on Mg(2+) as a cofactor.

It catalyses the reaction oxaloacetate + phosphate = phosphoenolpyruvate + hydrogencarbonate. Functionally, catalyzes the irreversible beta-carboxylation of phosphoenolpyruvate (PEP) to form oxaloacetate (OAA), a four-carbon dicarboxylic acid source for the tricarboxylic acid cycle. The chain is Phosphoenolpyruvate carboxylase from Leuconostoc mesenteroides subsp. mesenteroides (strain ATCC 8293 / DSM 20343 / BCRC 11652 / CCM 1803 / JCM 6124 / NCDO 523 / NBRC 100496 / NCIMB 8023 / NCTC 12954 / NRRL B-1118 / 37Y).